The primary structure comprises 263 residues: tRNA pseudouridine synthase A (263 aa).

Asp54 (nucleophile) is an active-site residue. Tyr113 is a binding site for substrate.

It belongs to the tRNA pseudouridine synthase TruA family. In terms of assembly, homodimer.

It carries out the reaction uridine(38/39/40) in tRNA = pseudouridine(38/39/40) in tRNA. Its function is as follows. Formation of pseudouridine at positions 38, 39 and 40 in the anticodon stem and loop of transfer RNAs. The sequence is that of tRNA pseudouridine synthase A from Lactobacillus helveticus (strain DPC 4571).